Reading from the N-terminus, the 706-residue chain is Heat shock protein 75 kDa, mitochondrial (706 aa).

Residues 1–60 (MARELRALLLWGRGLQSALRAPALAGVRRGKPVLHLQKTTVHFRDPTQSLASGISAGQLY) constitute a mitochondrion transit peptide. Asparagine 121 and aspartate 160 together coordinate ATP. Serine 172 carries the phosphoserine modification. Asparagine 173 is an ATP binding site. A Phosphothreonine modification is found at threonine 176. Serine 196 carries the post-translational modification Phosphoserine. Phenylalanine 207 is an ATP binding site. N6-acetyllysine is present on residues lysine 264, lysine 326, and lysine 334. Arginine 404 lines the ATP pocket. Residues lysine 426, lysine 433, and lysine 468 each carry the N6-acetyllysine modification. Position 496 is a phosphothreonine (threonine 496). Serine 570 carries the phosphoserine modification.

It belongs to the heat shock protein 90 family. As to quaternary structure, binds to the intracellular domain of tumor necrosis factor type 1 receptor. Binds to RB1. Interacts with SRC. Interacts with SDHA.

It localises to the mitochondrion. Its subcellular location is the mitochondrion inner membrane. It is found in the mitochondrion matrix. Functionally, chaperone that expresses an ATPase activity. Involved in maintaining mitochondrial function and polarization, downstream of PINK1 and mitochondrial complex I. Is a negative regulator of mitochondrial respiration able to modulate the balance between oxidative phosphorylation and aerobic glycolysis. The impact of TRAP1 on mitochondrial respiration is probably mediated by modulation of mitochondrial SRC and inhibition of SDHA. This chain is Heat shock protein 75 kDa, mitochondrial (Trap1), found in Rattus norvegicus (Rat).